The following is a 599-amino-acid chain: Membrane protein insertase YidC (599 aa).

A helical transmembrane segment spans residues 6-26 (NYFIAIALSVVIVLAWQFLYM). The segment at 35–78 (RAEEARQAQQQTTQQQPAPGAAPGATVEGAPPASSTQAAATATR) is disordered. The span at 41–76 (QAQQQTTQQQPAPGAAPGATVEGAPPASSTQAAATA) shows a compositional bias: low complexity. 4 consecutive transmembrane segments (helical) span residues 378–398 (FGVA…PLAS), 448–468 (WPML…YVTI), 501–521 (VPHF…MFLQ), and 536–556 (IFTW…AGLV).

This sequence belongs to the OXA1/ALB3/YidC family. Type 1 subfamily. In terms of assembly, interacts with the Sec translocase complex via SecD. Specifically interacts with transmembrane segments of nascent integral membrane proteins during membrane integration.

The protein resides in the cell inner membrane. Required for the insertion and/or proper folding and/or complex formation of integral membrane proteins into the membrane. Involved in integration of membrane proteins that insert both dependently and independently of the Sec translocase complex, as well as at least some lipoproteins. Aids folding of multispanning membrane proteins. This is Membrane protein insertase YidC from Agrobacterium fabrum (strain C58 / ATCC 33970) (Agrobacterium tumefaciens (strain C58)).